We begin with the raw amino-acid sequence, 397 residues long: Acetate kinase 2 (397 aa).

Residue Asn-8 participates in Mg(2+) binding. Residue Lys-15 coordinates ATP. Arg-89 is a binding site for substrate. Asp-146 acts as the Proton donor/acceptor in catalysis. Residues 206–210 (HLGNG), 281–283 (DLR), and 329–333 (GIGEN) each bind ATP. Residue Glu-382 participates in Mg(2+) binding.

The protein belongs to the acetokinase family. As to quaternary structure, homodimer. Mg(2+) serves as cofactor. It depends on Mn(2+) as a cofactor.

The protein localises to the cytoplasm. The catalysed reaction is acetate + ATP = acetyl phosphate + ADP. It functions in the pathway metabolic intermediate biosynthesis; acetyl-CoA biosynthesis; acetyl-CoA from acetate: step 1/2. Catalyzes the formation of acetyl phosphate from acetate and ATP. Can also catalyze the reverse reaction. This is Acetate kinase 2 from Listeria monocytogenes serotype 4b (strain F2365).